The following is a 406-amino-acid chain: Phosphopentomutase (406 aa).

Residues Asp10, Asp305, His310, Asp346, His347, and His358 each coordinate Mn(2+).

It belongs to the phosphopentomutase family. Mn(2+) is required as a cofactor.

The protein resides in the cytoplasm. It catalyses the reaction 2-deoxy-alpha-D-ribose 1-phosphate = 2-deoxy-D-ribose 5-phosphate. The enzyme catalyses alpha-D-ribose 1-phosphate = D-ribose 5-phosphate. It functions in the pathway carbohydrate degradation; 2-deoxy-D-ribose 1-phosphate degradation; D-glyceraldehyde 3-phosphate and acetaldehyde from 2-deoxy-alpha-D-ribose 1-phosphate: step 1/2. Its function is as follows. Isomerase that catalyzes the conversion of deoxy-ribose 1-phosphate (dRib-1-P) and ribose 1-phosphate (Rib-1-P) to deoxy-ribose 5-phosphate (dRib-5-P) and ribose 5-phosphate (Rib-5-P), respectively. The chain is Phosphopentomutase from Photobacterium profundum (strain SS9).